Here is a 398-residue protein sequence, read N- to C-terminus: tRNA-specific 2-thiouridylase MnmA (398 aa).

ATP is bound by residues 20 to 27 (AMSGGVDS) and Leu-46. Cys-114 acts as the Nucleophile in catalysis. The cysteines at positions 114 and 210 are disulfide-linked. Gly-138 is an ATP binding site. An interaction with tRNA region spans residues 160 to 162 (RDQ). Cys-210 acts as the Cysteine persulfide intermediate in catalysis.

Belongs to the MnmA/TRMU family.

The protein localises to the cytoplasm. The enzyme catalyses S-sulfanyl-L-cysteinyl-[protein] + uridine(34) in tRNA + AH2 + ATP = 2-thiouridine(34) in tRNA + L-cysteinyl-[protein] + A + AMP + diphosphate + H(+). Catalyzes the 2-thiolation of uridine at the wobble position (U34) of tRNA, leading to the formation of s(2)U34. The protein is tRNA-specific 2-thiouridylase MnmA of Brucella abortus (strain S19).